Here is a 765-residue protein sequence, read N- to C-terminus: Putative maltooligosyl trehalose synthase (765 aa).

Belongs to the glycosyl hydrolase 13 family. Monomer.

The enzyme catalyses 4-[(1-&gt;4)-alpha-D-glucosyl](n-1)-D-glucose = 1-[(1-&gt;4)-alpha-D-glucosyl](n-1)-alpha-D-glucose. Catalyzes the conversion of maltooligosaccharide into the non-reducing saccharide, maltooligosyl trehalose (alpha-maltooligosyl alpha-D-glucoside) by intramolecular transglycosylation. The sequence is that of Putative maltooligosyl trehalose synthase (treY) from Mycobacterium tuberculosis (strain CDC 1551 / Oshkosh).